A 461-amino-acid polypeptide reads, in one-letter code: ATP-dependent protease ATPase subunit HslU (461 aa).

Residues Val21, 63-68 (GVGKTE), Asp274, Glu339, and Arg411 each bind ATP.

Belongs to the ClpX chaperone family. HslU subfamily. In terms of assembly, a double ring-shaped homohexamer of HslV is capped on each side by a ring-shaped HslU homohexamer. The assembly of the HslU/HslV complex is dependent on binding of ATP.

It localises to the cytoplasm. Its function is as follows. ATPase subunit of a proteasome-like degradation complex; this subunit has chaperone activity. The binding of ATP and its subsequent hydrolysis by HslU are essential for unfolding of protein substrates subsequently hydrolyzed by HslV. HslU recognizes the N-terminal part of its protein substrates and unfolds these before they are guided to HslV for hydrolysis. The polypeptide is ATP-dependent protease ATPase subunit HslU (Caldanaerobacter subterraneus subsp. tengcongensis (strain DSM 15242 / JCM 11007 / NBRC 100824 / MB4) (Thermoanaerobacter tengcongensis)).